A 303-amino-acid chain; its full sequence is L(+)-tartrate dehydratase subunit alpha (303 aa).

Residues Cys71, Cys190, and Cys277 each coordinate iron-sulfur cluster.

It belongs to the class-I fumarase family. As to quaternary structure, tetramer of two alpha and two beta subunits. Requires iron-sulfur cluster as cofactor.

The catalysed reaction is (2R,3R)-tartrate = oxaloacetate + H2O. This chain is L(+)-tartrate dehydratase subunit alpha (ttdA), found in Escherichia coli O6:K15:H31 (strain 536 / UPEC).